Reading from the N-terminus, the 311-residue chain is Protoheme IX farnesyltransferase (311 aa).

The next 9 membrane-spanning stretches (helical) occupy residues 32 to 52 (VMSLVVFTALVGLVVSPVSIN), 53 to 73 (PWYGFLAILCIAIGGGGAGVL), 104 to 124 (FVFGMVLSMLSVLMMGKFINW), 125 to 145 (FAALLLAFTIFFYIVIYTIWL), 153 to 173 (IVIGGAAGAFPPMIGCAAATG), 180 to 200 (FLLFLIIFMWTPPHFWSLSLF), 224 to 244 (KQILFYTILMTISAAGPFIID), 245 to 265 (FAGIFYAIFSTILSVIFIYFA), and 290 to 310 (FYLAAIFGILLIEFLVWYFII).

The protein belongs to the UbiA prenyltransferase family. Protoheme IX farnesyltransferase subfamily.

The protein localises to the cell inner membrane. The enzyme catalyses heme b + (2E,6E)-farnesyl diphosphate + H2O = Fe(II)-heme o + diphosphate. It functions in the pathway porphyrin-containing compound metabolism; heme O biosynthesis; heme O from protoheme: step 1/1. In terms of biological role, converts heme B (protoheme IX) to heme O by substitution of the vinyl group on carbon 2 of heme B porphyrin ring with a hydroxyethyl farnesyl side group. This chain is Protoheme IX farnesyltransferase, found in Bartonella quintana (strain Toulouse) (Rochalimaea quintana).